Consider the following 253-residue polypeptide: Protein phosphatase CheZ (253 aa).

The disordered stretch occupies residues 1–84; that stretch reads MTQEELDALM…EWPPPPPTEE (84 aa). The segment covering 21–69 has biased composition (basic and acidic residues); the sequence is LETKEETKEEAKEEAKEEAKEEAKEKEEIKEESSSQKMTVKKEDAEKYG.

Belongs to the CheZ family. Interacts with ChePep; this interaction is essential for each other polar localization.

It localises to the cytoplasm. Plays an important role in bacterial chemotaxis signal transduction pathway by accelerating the dephosphorylation of phosphorylated CheY (CheY-P). Also dephosphorylates CheV2 but not CheV1 or CheV3. In addition, forms a distinct chemotaxis regulatory complex with ChePep independently of the core chemotaxis signaling proteins. The sequence is that of Protein phosphatase CheZ from Helicobacter pylori (strain ATCC 700392 / 26695) (Campylobacter pylori).